The sequence spans 158 residues: 2-C-methyl-D-erythritol 2,4-cyclodiphosphate synthase (158 aa).

Residues D9 and H11 each contribute to the a divalent metal cation site. Residues 9 to 11 (DVH) and 35 to 36 (HS) each bind 4-CDP-2-C-methyl-D-erythritol 2-phosphate. Residue H43 participates in a divalent metal cation binding. Residues 57–59 (DLG), 62–66 (FPDTD), 133–136 (TTTE), F140, and R143 each bind 4-CDP-2-C-methyl-D-erythritol 2-phosphate.

Belongs to the IspF family. As to quaternary structure, homotrimer. Requires a divalent metal cation as cofactor.

The catalysed reaction is 4-CDP-2-C-methyl-D-erythritol 2-phosphate = 2-C-methyl-D-erythritol 2,4-cyclic diphosphate + CMP. Its pathway is isoprenoid biosynthesis; isopentenyl diphosphate biosynthesis via DXP pathway; isopentenyl diphosphate from 1-deoxy-D-xylulose 5-phosphate: step 4/6. Functionally, involved in the biosynthesis of isopentenyl diphosphate (IPP) and dimethylallyl diphosphate (DMAPP), two major building blocks of isoprenoid compounds. Catalyzes the conversion of 4-diphosphocytidyl-2-C-methyl-D-erythritol 2-phosphate (CDP-ME2P) to 2-C-methyl-D-erythritol 2,4-cyclodiphosphate (ME-CPP) with a corresponding release of cytidine 5-monophosphate (CMP). The sequence is that of 2-C-methyl-D-erythritol 2,4-cyclodiphosphate synthase from Desulfitobacterium hafniense (strain DSM 10664 / DCB-2).